We begin with the raw amino-acid sequence, 73 residues long: Ocellatin-PT8 (73 aa).

A signal peptide spans 1–22; the sequence is MAFLKKSLFLVLFLGLVSLSIC. Residues 23–39 constitute a propeptide that is removed on maturation; sequence DEEKRQDEDDDDDDDEE.

As to expression, expressed by the skin glands.

It is found in the secreted. Functionally, has antibacterial activity against Gram-negative bacteria E.coli ATCC 25922 (MIC=60 uM), K.pneumoniae ATCC 700603 (MIC=240 uM) and S.choleraesuis ATCC 14028 (MIC=240 uM) and against Gram-positive bacterium S.aureus ATCC 29313 (MIC=240 uM). Shows no hemolytic activity and no cytotoxicity. This is Ocellatin-PT8 from Leptodactylus pustulatus (Ceara white-lipped frog).